The following is a 667-amino-acid chain: WD repeat-containing protein 48 homolog (667 aa).

8 WD repeats span residues 26–65, 71–110, 113–152, 164–203, 206–245, 248–287, 290–329, and 349–388; these read QHRNGVNALQLDSNNGKLYSAGRDAIIRVWNTRTESNDKY, HHNDWVNDIVLCCNGRNLISASCDTTVKVWNAHKGFCMST, THRDYVQALAYAKDREQVASAGLDKAIFLWDVNTLTALTA, GSKDSIYSLAMNPSGTVIVSGSTENILRIWDPRTCMRSMK, GHTENVRCLVVSPDGNQVVSGSSDGTIKVWNLGQQRCIQT, VHKEGVWSLLMSENFQYIISGSRDRNIIVTEMRNPSNKML, EEKAPVLSLGYNIDKTGVWATTWNSDIRCWKLPMYDRCTL, and KGGAAIKECTVLNDKRYIITKDSQDQVVVYDVLRVIKKEE. The segment at 591-615 is disordered; the sequence is ETTPSGGNANNSLQNSQSDANSEGS.

It belongs to the WD repeat WDR48 family. In terms of assembly, catalytic component of the Usp12-46 deubiquitylase complex consisting of Usp12-46, Wdr20 and Uaf1; regulatory subunit that, together wtih Wdr20, stabilizes Usp12-46. The Usp12-46 deubiquitylase complex associates with arr/arrow; the interaction leads to deubiquitination and stabilization of arr/arrow.

Regulatory component of the Usp12-46 deubiquitylase complex. activates deubiquitination by increasing the catalytic turnover without increasing the affinity of deubiquitinating enzymes for the substrate. The complex deubiquitylates the wg/wingless-signaling receptor arr/arrow, which stabilizes the receptor and increases its concentration at the cell surface; this enhances the sensitivity of cells to wg/wingless-signal stimulation. This increases the amplitude and spatial range of the signaling response to the wg/wingless morphogen gradient, facilitating the precise concentration-dependent regulation of its target genes. Together with Wdr20 and Usp12-46 required for wg/wingless-mediated signaling in the wing imaginal disc and for wg/wingless-dependent regulation of intestinal stem cell proliferation. This is WD repeat-containing protein 48 homolog from Drosophila virilis (Fruit fly).